A 231-amino-acid polypeptide reads, in one-letter code: Uracil-DNA glycosylase (231 aa).

The Proton acceptor role is filled by Asp74.

This sequence belongs to the uracil-DNA glycosylase (UDG) superfamily. UNG family.

Its subcellular location is the cytoplasm. The enzyme catalyses Hydrolyzes single-stranded DNA or mismatched double-stranded DNA and polynucleotides, releasing free uracil.. Functionally, excises uracil residues from the DNA which can arise as a result of misincorporation of dUMP residues by DNA polymerase or due to deamination of cytosine. The protein is Uracil-DNA glycosylase of Campylobacter jejuni subsp. jejuni serotype O:2 (strain ATCC 700819 / NCTC 11168).